The following is a 411-amino-acid chain: G2/mitotic-specific cyclin cig2 (411 aa).

Positions 51–60 match the Destruction box motif; it reads RTVLSDVSNV. Residues 57 to 89 are disordered; it reads VSNVGKNNADEKDTKKAKRSFDESNLSTNEEAD. Residues 64–78 are compositionally biased toward basic and acidic residues; sequence NADEKDTKKAKRSFD. The 127-residue stretch at 139–265 folds into the Cyclin N-terminal domain; that stretch reads EIFEYIRKLD…MLNVLNFDLS (127 aa). The segment at 181–273 is interaction with pop1; it reads SNFCLMPETL…LSYPSPLNFL (93 aa).

Belongs to the cyclin family. Cyclin AB subfamily. In terms of assembly, associates with cdc2, res2 and rum1. Interacts with pop1 only when phosphorylated. In terms of processing, phosphorylated.

It is found in the nucleus. The protein localises to the cytoplasm. It localises to the cytoskeleton. The protein resides in the microtubule organizing center. Its subcellular location is the spindle pole body. Its function is as follows. Essential for the control of the cell cycle at the G2/M and G1/S (mitosis) transition. Interacts with the cdc2 protein kinase to form MPF. Interaction with res2 promotes the phosphorylation of res1 and inhibits MBF-dependent gene transcription. Forms an autoregulating feedback-inhibition loop with MBF which is important for normal regulation of the cell cycle. G2/M cyclins accumulate steadily during G2 and are abruptly destroyed at mitosis. Negatively regulates conjugation via interacting with cell cycle 'start' genes. Degraded by skp1, pop1 and pop2 in the G2 and M phases of the cell cycle. The protein is G2/mitotic-specific cyclin cig2 (cig2) of Schizosaccharomyces pombe (strain 972 / ATCC 24843) (Fission yeast).